A 186-amino-acid polypeptide reads, in one-letter code: Ribosome-recycling factor (186 aa).

The protein belongs to the RRF family.

It is found in the cytoplasm. Its function is as follows. Responsible for the release of ribosomes from messenger RNA at the termination of protein biosynthesis. May increase the efficiency of translation by recycling ribosomes from one round of translation to another. This Pediococcus pentosaceus (strain ATCC 25745 / CCUG 21536 / LMG 10740 / 183-1w) protein is Ribosome-recycling factor.